The sequence spans 648 residues: MFYNNPLLIKLKNKLYKKKKIEGIVKSTTKGFGFLEVDSKKTYFIPSKNMKKVIHGDRIIGLIKLENNKEIVYPKILIEPFLKKFIGSILKKNNIIYIQANYPYIKDLIFYRYKTSVFRSWKNGDWVIAELDTHSLRDNNHFSINILKFISEKNDPLTPWNVILSKYNLEKKSPKINFNYILNNNNLKDKRIDLTYLDFITIDNSNTQDIDDALFVKKTKKNKLTLIVAIADPTEYILINTKVDDIAKKRVFTNYLPGFNISMLPKEFSEDLCSLKPHVKRPVLACKIIIDNEGKILMKKTKFFLAWIESKGKLSYQNVSNWLEKLGNWQPDNKKIKKQILLLYKMYKIRNMWRKKNALIFPDNIEYKFHLSKTWEILNISVEKRSIAHKIVEESMISANICAASFLKKKLGFGLYNSHSGFDTFNAKNAINFLKKYNIIFTLEEIMTLSGFCKLKRKLNKLSNKYINYRIQKFQSFGEISLIPKPHFSLGLPYYATWTSPIRKYSDMINHRLIKSIIIGKKKISPPDTNIIPQIIHRKYKIRMALKEIEEWLYFKYYNKKKSDKKKYQANIIDISKGGIKARLLKTGAYIFIPVTYIHKIRHELNLNSEKGIIYIKNKIYYKVSDIIIVSLLKINNGNKKIIATMIN.

An RNB domain is found at 191 to 518 (RIDLTYLDFI…INHRLIKSII (328 aa)). One can recognise an S1 motif domain in the interval 565–647 (KKKYQANIID…GNKKIIATMI (83 aa)).

Belongs to the RNR ribonuclease family. RNase II subfamily.

It is found in the cytoplasm. It carries out the reaction Exonucleolytic cleavage in the 3'- to 5'-direction to yield nucleoside 5'-phosphates.. Functionally, involved in mRNA degradation. Hydrolyzes single-stranded polyribonucleotides processively in the 3' to 5' direction. The polypeptide is Exoribonuclease 2 (Buchnera aphidicola subsp. Cinara cedri (strain Cc)).